Here is an 830-residue protein sequence, read N- to C-terminus: Dimethylglycine oxidase (830 aa).

FAD contacts are provided by residues 14-15 (IV), 35-36 (DQ), 45-48 (STSH), L52, and V174. H48 is modified (pros-8alpha-FAD histidine). Catalysis depends on residues H225 and Y259. FAD-binding positions include Y259 and 360-363 (VWVT). Position 539 (Y539) interacts with (6S)-5,6,7,8-tetrahydrofolate. The active-site For 5,10-methylenetetrahydrofolate synthesis activity is D552. (6S)-5,6,7,8-tetrahydrofolate is bound by residues T554, G566, and 658–660 (ELY).

This sequence belongs to the GcvT family. FAD is required as a cofactor.

It catalyses the reaction N,N-dimethylglycine + O2 + H2O = sarcosine + formaldehyde + H2O2. It carries out the reaction N,N-dimethylglycine + (6S)-5,6,7,8-tetrahydrofolate + O2 = sarcosine + (6R)-5,10-methylene-5,6,7,8-tetrahydrofolate + H2O2. In terms of biological role, catalyzes the oxidative demethylation of N,N-dimethylglycine to yield sarcosine, formaldehyde and hydrogen peroxide. The oxidation of dimethylglycine is coupled to the synthesis of 5,10-methylenetetrahydrofolate through an unusual substrate channeling mechanism. This channeling occurs by nonbiased diffusion of the iminium intermediate through a large solvent cavity connecting active site 1 (N-terminus) and active site 2 (C-terminus). The synthesis of 5,10-methylenetetrahydrofolate (at active site 2) prevents the accumulation of formaldehyde, formed by hydrolysis of the iminium intermediate product (at active site 1). Does not oxidize sarcosine. This chain is Dimethylglycine oxidase (dmg), found in Arthrobacter globiformis.